The sequence spans 279 residues: Vacuolar iron transporter cccA (279 aa).

The disordered stretch occupies residues 1 to 44; sequence MLGGRHSHWSPQDLEEQAFSPYGTFPPSPTESTETSSSISSTRP. A compositionally biased stretch (low complexity) spans 30–44; it reads TESTETSSSISSTRP. Transmembrane regions (helical) follow at residues 55–75, 80–100, 185–205, 208–228, and 243–263; these read ILGL…LSAL, VVVV…GLGG, ITLA…YFMV, VLVA…VFGY, and IVAG…AAGA.

Belongs to the CCC1 family.

It is found in the vacuole membrane. It carries out the reaction Fe(2+)(in) = Fe(2+)(out). Functionally, vacuolar iron transporter involved in the transfer of iron from the cytosol to the vacuole for intracellular iron storage. Plays an essential role in iron detoxification during high iron conditions. In Arthroderma benhamiae (strain ATCC MYA-4681 / CBS 112371) (Trichophyton mentagrophytes), this protein is Vacuolar iron transporter cccA.